Consider the following 876-residue polypeptide: Valine--tRNA ligase (876 aa).

Positions 44–54 match the 'HIGH' region motif; it reads PNVTGKLHLGH. Residues 520 to 524 carry the 'KMSKS' region motif; the sequence is KMSKS. K523 serves as a coordination point for ATP. Residues 805-876 are a coiled coil; it reads LEGLIDMDKE…VKSRIEQLKA (72 aa).

Belongs to the class-I aminoacyl-tRNA synthetase family. ValS type 1 subfamily. Monomer.

It localises to the cytoplasm. The enzyme catalyses tRNA(Val) + L-valine + ATP = L-valyl-tRNA(Val) + AMP + diphosphate. Its function is as follows. Catalyzes the attachment of valine to tRNA(Val). As ValRS can inadvertently accommodate and process structurally similar amino acids such as threonine, to avoid such errors, it has a 'posttransfer' editing activity that hydrolyzes mischarged Thr-tRNA(Val) in a tRNA-dependent manner. This is Valine--tRNA ligase from Staphylococcus epidermidis (strain ATCC 35984 / DSM 28319 / BCRC 17069 / CCUG 31568 / BM 3577 / RP62A).